A 319-amino-acid chain; its full sequence is MKCILFKWVLCLLLGFSSVSYSREFTIDFSTQQSYVSSLNSIRTEISTPLEHISQGTTSVSVINHTPPGSYFAVDIRGLDVYQARFDHLRLIIEQNNLYVAGFVNTATNTFYRFSDFTHISVPGVTTVSMTTDSSYTTLQRVAALERSGMQISRHSLVSSYLALMEFSGNTMTRDASRAVLRFVTVTAEALRFRQIQREFRQALSETAPVYTMTPGDVDLTLNWGRISNVLPEYRGEDGVRVGRISFNNISAILGTVAVILNCHHQGARSVRAVNEESQPECQITGDRPVIKINNTLWESNTAAAFLNRKSQFLYTTGK.

A signal peptide spans 1–22 (MKCILFKWVLCLLLGFSSVSYS). Residues 23 to 272 (REFTIDFSTQ…CHHQGARSVR (250 aa)) are A1. Residue Glu-189 is part of the active site. A disulfide bond links Cys-263 and Cys-282. Residues 273–314 (AVNEESQPECQITGDRPVIKINNTLWESNTAAAFLNRKSQFL) form an A2 region.

The protein belongs to the ribosome-inactivating protein family. As to quaternary structure, shiga-like toxin contains a single A subunit and multiple copies of a B subunit.

Its subcellular location is the secreted. The catalysed reaction is Endohydrolysis of the N-glycosidic bond at one specific adenosine on the 28S rRNA.. Functionally, the A subunit is responsible for inhibiting protein synthesis through the catalytic inactivation of 60S ribosomal subunits. After endocytosis, the A subunit is cleaved by furin in two fragments, A1 and A2: A1 is the catalytically active fragment, and A2 is essential for holotoxin assembly with the B subunits. The protein is Shiga-like toxin 2 subunit A (stxA2) of Escherichia coli O157:H7 (Bacteriophage 933W).